Here is a 390-residue protein sequence, read N- to C-terminus: Flap endonuclease 1 (390 aa).

The interval 1–111 (MGIKGLAKLL…GELLKRREKR (111 aa)) is N-domain. Residue Asp-34 participates in Mg(2+) binding. Arg-47 and Arg-77 together coordinate DNA. Residues Asp-93, Glu-165, Glu-167, Asp-186, and Asp-188 each contribute to the Mg(2+) site. The segment at 129 to 260 (EQDKQSKRLV…KTALKLIREH (132 aa)) is I-domain. Glu-165 is a DNA binding site. DNA contacts are provided by Gly-238 and Asp-240. Residue Asp-240 participates in Mg(2+) binding. The interval 342 to 390 (KPQSRMDSFFKVKANPEGDKKKAEKRKAELAASRGKGKKGKGGGGFKKK) is disordered. Positions 343-351 (PQSRMDSFF) are interaction with PCNA. Residues 349-370 (SFFKVKANPEGDKKKAEKRKAE) show a composition bias toward basic and acidic residues. The span at 376–390 (GKGKKGKGGGGFKKK) shows a compositional bias: basic residues.

It belongs to the XPG/RAD2 endonuclease family. FEN1 subfamily. As to quaternary structure, interacts with PCNA. Three molecules of FEN1 bind to one PCNA trimer with each molecule binding to one PCNA monomer. PCNA stimulates the nuclease activity without altering cleavage specificity. Mg(2+) serves as cofactor. Phosphorylated. Phosphorylation upon DNA damage induces relocalization to the nuclear plasma.

The protein resides in the nucleus. Its subcellular location is the nucleolus. It is found in the nucleoplasm. It localises to the mitochondrion. Functionally, structure-specific nuclease with 5'-flap endonuclease and 5'-3' exonuclease activities involved in DNA replication and repair. During DNA replication, cleaves the 5'-overhanging flap structure that is generated by displacement synthesis when DNA polymerase encounters the 5'-end of a downstream Okazaki fragment. It enters the flap from the 5'-end and then tracks to cleave the flap base, leaving a nick for ligation. Also involved in the long patch base excision repair (LP-BER) pathway, by cleaving within the apurinic/apyrimidinic (AP) site-terminated flap. Acts as a genome stabilization factor that prevents flaps from equilibrating into structures that lead to duplications and deletions. Also possesses 5'-3' exonuclease activity on nicked or gapped double-stranded DNA, and exhibits RNase H activity. Also involved in replication and repair of rDNA and in repairing mitochondrial DNA. In Thalassiosira pseudonana (Marine diatom), this protein is Flap endonuclease 1.